Reading from the N-terminus, the 267-residue chain is DNA damage-regulated autophagy modulator protein 2 (267 aa).

The next 6 helical transmembrane spans lie at 8-28, 53-73, 87-107, 118-138, 160-180, and 203-223; these read LSFLPSALVIWTFATFIFSYI, RCLFGVMLNIAAVLGIATIYV, LIIKLNKAGLVLGILSCLGLS, FIVHVCGAVLAFSMGSFYMFV, LLLVIWCGVSALSMMTCSSIL, and VLHIVTTAAEWSMSFSFFGFF.

Belongs to the DRAM/TMEM150 family.

It localises to the lysosome membrane. Its subcellular location is the photoreceptor inner segment. The protein resides in the apical cell membrane. Plays a role in the initiation of autophagy. In the retina, might be involved in the process of photoreceptor cells renewal and recycling to preserve visual function. Induces apoptotic cell death when coexpressed with DRAM1. The chain is DNA damage-regulated autophagy modulator protein 2 (Dram2) from Rattus norvegicus (Rat).